The primary structure comprises 315 residues: Ribose-phosphate pyrophosphokinase (315 aa).

Residues 37 to 39 (DGE) and 96 to 97 (RQ) contribute to the ATP site. Residues H131 and D171 each contribute to the Mg(2+) site. Residue K195 is part of the active site. D-ribose 5-phosphate-binding positions include R197, D221, and 225–229 (DTGGT).

Belongs to the ribose-phosphate pyrophosphokinase family. Class I subfamily. Homohexamer. It depends on Mg(2+) as a cofactor.

The protein localises to the cytoplasm. The enzyme catalyses D-ribose 5-phosphate + ATP = 5-phospho-alpha-D-ribose 1-diphosphate + AMP + H(+). It participates in metabolic intermediate biosynthesis; 5-phospho-alpha-D-ribose 1-diphosphate biosynthesis; 5-phospho-alpha-D-ribose 1-diphosphate from D-ribose 5-phosphate (route I): step 1/1. Its function is as follows. Involved in the biosynthesis of the central metabolite phospho-alpha-D-ribosyl-1-pyrophosphate (PRPP) via the transfer of pyrophosphoryl group from ATP to 1-hydroxyl of ribose-5-phosphate (Rib-5-P). The polypeptide is Ribose-phosphate pyrophosphokinase (Haemophilus influenzae (strain ATCC 51907 / DSM 11121 / KW20 / Rd)).